A 785-amino-acid polypeptide reads, in one-letter code: uncharacterized protein (785 aa).

The 93-residue stretch at 1-93 (MSWVMVSPEL…GGAYAAAEAA (93 aa)) folds into the PE domain.

It belongs to the mycobacterial PE family. PGRS subfamily.

This is an uncharacterized protein from Mycobacterium tuberculosis (strain CDC 1551 / Oshkosh).